A 384-amino-acid polypeptide reads, in one-letter code: Chaperone protein DnaJ (384 aa).

Residues 5–70 (DFYQVLGVSK…QKRQMYDQYG (66 aa)) form the J domain. A CR-type zinc finger spans residues 138-216 (GKTVELEIPT…CHGHGRKEET (79 aa)). The Zn(2+) site is built by Cys151, Cys154, Cys168, Cys171, Cys190, Cys193, Cys204, and Cys207. CXXCXGXG motif repeat units follow at residues 151–158 (CRDCNGSG), 168–175 (CGHCHGSG), 190–197 (CPQCRGTG), and 204–211 (CRTCHGHG).

The protein belongs to the DnaJ family. Homodimer. Requires Zn(2+) as cofactor.

The protein localises to the cytoplasm. Participates actively in the response to hyperosmotic and heat shock by preventing the aggregation of stress-denatured proteins and by disaggregating proteins, also in an autonomous, DnaK-independent fashion. Unfolded proteins bind initially to DnaJ; upon interaction with the DnaJ-bound protein, DnaK hydrolyzes its bound ATP, resulting in the formation of a stable complex. GrpE releases ADP from DnaK; ATP binding to DnaK triggers the release of the substrate protein, thus completing the reaction cycle. Several rounds of ATP-dependent interactions between DnaJ, DnaK and GrpE are required for fully efficient folding. Also involved, together with DnaK and GrpE, in the DNA replication of plasmids through activation of initiation proteins. The polypeptide is Chaperone protein DnaJ (Idiomarina loihiensis (strain ATCC BAA-735 / DSM 15497 / L2-TR)).